The sequence spans 805 residues: DNA gyrase subunit B (805 aa).

The Toprim domain occupies 435-550 (SEIFIVEGDS…RGYIYIAQPP (116 aa)). Mg(2+) contacts are provided by Glu441, Asp515, and Asp517.

Belongs to the type II topoisomerase GyrB family. As to quaternary structure, heterotetramer, composed of two GyrA and two GyrB chains. In the heterotetramer, GyrA contains the active site tyrosine that forms a transient covalent intermediate with DNA, while GyrB binds cofactors and catalyzes ATP hydrolysis. It depends on Mg(2+) as a cofactor. The cofactor is Mn(2+). Requires Ca(2+) as cofactor.

Its subcellular location is the cytoplasm. The catalysed reaction is ATP-dependent breakage, passage and rejoining of double-stranded DNA.. Its function is as follows. A type II topoisomerase that negatively supercoils closed circular double-stranded (ds) DNA in an ATP-dependent manner to modulate DNA topology and maintain chromosomes in an underwound state. Negative supercoiling favors strand separation, and DNA replication, transcription, recombination and repair, all of which involve strand separation. Also able to catalyze the interconversion of other topological isomers of dsDNA rings, including catenanes and knotted rings. Type II topoisomerases break and join 2 DNA strands simultaneously in an ATP-dependent manner. The chain is DNA gyrase subunit B from Caulobacter vibrioides (strain ATCC 19089 / CIP 103742 / CB 15) (Caulobacter crescentus).